Consider the following 247-residue polypeptide: MTIPLLEINSLSFSYKVNLPPVFNNLSLKIEQGELIGLLGENPAGKTTLFNLIRGGVSNYEGTLKRNFSGGELVSLPQVINLSGTLRNEEVLDLICCFNKLTKKQAWTDVNHKWNDNFFIRYDKIRRKRTYTVSYGEKRWLIISLMVTLCKNARLFLLDEPTVGIDIQYRMMLWELINKITADGKTVFFSTHIFDELTRDKIPFYMLSKNSINRYSDMSDFIQSNNETTQKRHLLKKLWEQETDTWI.

An ABC transporter domain is found at 6–234 (LEINSLSFSY…NNETTQKRHL (229 aa)). An ATP-binding site is contributed by 40 to 47 (GENPAGKT).

This sequence belongs to the ABC transporter superfamily.

In terms of biological role, together with two further proteins McbE and McbG this protein causes immunity to the peptide antibiotic microcin B17, which inhibits DNA replication in enterobacteriaceae. Immunity is determined by two different mechanisms. McbE is involved in the production of extracellular MccB17 and, in a complex with mcbf it also serves as 'pump' for the export of active MccB17 from the cytoplasm to the periplasmic space. This chain is Protein McbF (mcbF), found in Escherichia coli.